The chain runs to 181 residues: TATA-box-binding protein (181 aa).

A run of 2 repeats spans residues 8–84 (IENI…VDMM) and 99–175 (IQNI…KARL).

This sequence belongs to the TBP family.

General factor that plays a role in the activation of archaeal genes transcribed by RNA polymerase. Binds specifically to the TATA box promoter element which lies close to the position of transcription initiation. This chain is TATA-box-binding protein (tbp), found in Methanothermobacter thermautotrophicus (strain ATCC 29096 / DSM 1053 / JCM 10044 / NBRC 100330 / Delta H) (Methanobacterium thermoautotrophicum).